The following is a 336-amino-acid chain: 3-isopropylmalate dehydrogenase (336 aa).

Residues Arg-87, Arg-97, Arg-121, and Asp-211 each coordinate substrate. Positions 211, 235, and 239 each coordinate Mg(2+). 271 to 283 provides a ligand contact to NAD(+); the sequence is GSAPDIAGQGIAD.

This sequence belongs to the isocitrate and isopropylmalate dehydrogenases family. LeuB type 2 subfamily. As to quaternary structure, homodimer. Mg(2+) is required as a cofactor. The cofactor is Mn(2+).

It localises to the cytoplasm. The enzyme catalyses (2R,3S)-3-isopropylmalate + NAD(+) = 4-methyl-2-oxopentanoate + CO2 + NADH. Its pathway is amino-acid biosynthesis; L-leucine biosynthesis; L-leucine from 3-methyl-2-oxobutanoate: step 3/4. Its function is as follows. Catalyzes the oxidation of 3-carboxy-2-hydroxy-4-methylpentanoate (3-isopropylmalate) to 3-carboxy-4-methyl-2-oxopentanoate. The product decarboxylates to 4-methyl-2 oxopentanoate. In Mycolicibacterium gilvum (strain PYR-GCK) (Mycobacterium gilvum (strain PYR-GCK)), this protein is 3-isopropylmalate dehydrogenase.